The following is a 566-amino-acid chain: Repressible alkaline phosphatase (566 aa).

Positions 1 to 11 are enriched in polar residues; it reads MMTHTLPSEQT. The interval 1-27 is disordered; the sequence is MMTHTLPSEQTRLVPGSDSSSRPKKRR. Residues 1-33 are Cytoplasmic-facing; sequence MMTHTLPSEQTRLVPGSDSSSRPKKRRISKRSK. A helical membrane pass occupies residues 34-59; the sequence is IIVSTVVCIGLLLVLVQLAFPSSFAL. Position 75 (aspartate 75) interacts with Mg(2+). Aspartate 75 provides a ligand contact to Zn(2+). The active-site Phosphoserine intermediate is serine 123. Position 123 is a phosphoserine (serine 123). Aspartate 174 and threonine 176 together coordinate Mg(2+). N-linked (GlcNAc...) asparagine glycosylation is present at asparagine 268. Glutamate 325 lines the Mg(2+) pocket. Zn(2+)-binding residues include aspartate 330, histidine 334, aspartate 373, and histidine 374. Asparagine 401 carries N-linked (GlcNAc...) asparagine glycosylation. Histidine 484 serves as a coordination point for Zn(2+).

The protein belongs to the alkaline phosphatase family. Mg(2+) is required as a cofactor. It depends on Zn(2+) as a cofactor.

Its subcellular location is the vacuole membrane. The protein localises to the cytoplasm. It carries out the reaction a phosphate monoester + H2O = an alcohol + phosphate. The enzyme catalyses (2E,6E)-farnesyl diphosphate + H2O = (2E,6E)-farnesol + diphosphate. It catalyses the reaction beta-D-fructose 2,6-bisphosphate + H2O = beta-D-fructose 2-phosphate + phosphate. In terms of biological role, phosphatase with broad substrate specificity. A truncated (soluble) version of the protein is responsible for the production of (E,E)-farnesol from (E,E)-farnesyl diphosphate. Acts as a fructose-2,6-bisphosphate 6-phosphatase. The protein is Repressible alkaline phosphatase (PHO8) of Saccharomyces cerevisiae (strain ATCC 204508 / S288c) (Baker's yeast).